The following is a 171-amino-acid chain: UPF0316 protein Exig_2248 (171 aa).

3 consecutive transmembrane segments (helical) span residues 4–24 (ILLI…RTIM), 31–51 (IIAG…LGIV), and 57–77 (TVGM…GGFV).

Belongs to the UPF0316 family.

Its subcellular location is the cell membrane. In Exiguobacterium sibiricum (strain DSM 17290 / CCUG 55495 / CIP 109462 / JCM 13490 / 255-15), this protein is UPF0316 protein Exig_2248.